Consider the following 688-residue polypeptide: Elongation factor G (688 aa).

The tr-type G domain occupies 6–280 (KLFRNFGIMA…AVVDFLPSPI (275 aa)). GTP is bound by residues 15–22 (AHIDAGKT), 79–83 (DTPGH), and 133–136 (NKMD).

Belongs to the TRAFAC class translation factor GTPase superfamily. Classic translation factor GTPase family. EF-G/EF-2 subfamily.

It localises to the cytoplasm. Catalyzes the GTP-dependent ribosomal translocation step during translation elongation. During this step, the ribosome changes from the pre-translocational (PRE) to the post-translocational (POST) state as the newly formed A-site-bound peptidyl-tRNA and P-site-bound deacylated tRNA move to the P and E sites, respectively. Catalyzes the coordinated movement of the two tRNA molecules, the mRNA and conformational changes in the ribosome. The sequence is that of Elongation factor G from Ureaplasma parvum serovar 3 (strain ATCC 27815 / 27 / NCTC 11736).